A 997-amino-acid chain; its full sequence is Signal peptide, CUB and EGF-like domain-containing protein 2 (997 aa).

The signal sequence occupies residues 1 to 28 (MGVAGCGRPREARALLLLLLLLPPLLAA). The region spanning 43–83 (DVDECAQGLDDCHADALCQNTPTSYKCSCKPGYQGEGRQCE) is the EGF-like 1; calcium-binding domain. Disulfide bonds link Cys47/Cys60, Cys54/Cys69, Cys71/Cys82, Cys88/Cys100, Cys96/Cys109, Cys111/Cys124, Cys130/Cys141, and Cys137/Cys150. In terms of domain architecture, EGF-like 2; calcium-binding spans 84 to 125 (DMDECDNTLNGGCVHDCLNIPGNYRCTCFDGFMLAHDGHNCL). The EGF-like 3; calcium-binding domain maps to 126 to 162 (DMDECLENNGGCQHICTNVIGSYECRCKEGFFLSDNQ). 3 consecutive EGF-like domains span residues 175–211 (CMNKDHGCGHICKEAPRGSVACECRPGFELAKNQKDC), 215–250 (CNHGNGGCQHSCEDTAEGPECSCHPRYRLHADGRSC), and 284–319 (CAVNNGGCDRTCKDTSTGVHCSCPTGFTLQVDGKTC). An EGF-like 7; calcium-binding domain is found at 321-361 (DIDECQTRNGGCNHFCKNTVGSFDCSCKKGFKLLTDEKSCQ). Intrachain disulfides connect Cys325–Cys336, Cys332–Cys345, Cys347–Cys360, Cys366–Cys376, Cys372–Cys385, Cys387–Cys399, Cys405–Cys416, Cys412–Cys425, and Cys427–Cys440. One can recognise an EGF-like 8; calcium-binding domain in the interval 362–400 (DVDECSLERTCDHSCINHPGTFICACNPGYTLYSFTHCG). Residues 401–441 (DTNECSVNNGGCQQVCINTVGSYECQCHPGFKLHWNKKDCV) enclose the EGF-like 9; calcium-binding domain. A glycan (N-linked (GlcNAc...) asparagine) is linked at Asn657. The cysteines at positions 807 and 833 are disulfide-linked. A CUB domain is found at 807 to 919 (CGGELGDFTG…RGFQVPYVTY (113 aa)). The tract at residues 845–854 (ILIVVPEIFL) is interaction with the cholesterol-anchor of SHH. A disulfide bond links Cys860 and Cys881.

As to quaternary structure, interacts with SHH via the cholesterol anchor of the dually lipid-modified SHH (ShhNp). Interacts with PTCH1. Forms homooligomers and heterooligomers with SCUBE1 and SCUBE3. Interacts with VEGFR2. In terms of processing, N-glycosylated. Expressed in adult heart, lung and testis.

The protein resides in the secreted. It localises to the cell surface. Functionally, lipid-binding protein required for SHH long-range signaling by binding to the dually lipid-modified SHH (ShhNp) and by promoting ShhNp mobilization, solubilization and release from the cell membrane. Acts by enhancing the proteolytic processing (shedding) of the lipid-modified N- and C- terminal of ShhNp at the cell surface. Synergizes with DISP1 to cause an increase in SHH secretion. Probable cell surface coreceptor for VEGFR2 involved in VEGFR2-mediated angiogenesis. The polypeptide is Signal peptide, CUB and EGF-like domain-containing protein 2 (Mus musculus (Mouse)).